Consider the following 389-residue polypeptide: ATP phosphoribosyltransferase regulatory subunit (389 aa).

This sequence belongs to the class-II aminoacyl-tRNA synthetase family. HisZ subfamily. Heteromultimer composed of HisG and HisZ subunits.

It is found in the cytoplasm. It functions in the pathway amino-acid biosynthesis; L-histidine biosynthesis; L-histidine from 5-phospho-alpha-D-ribose 1-diphosphate: step 1/9. Required for the first step of histidine biosynthesis. May allow the feedback regulation of ATP phosphoribosyltransferase activity by histidine. The sequence is that of ATP phosphoribosyltransferase regulatory subunit from Hydrogenovibrio crunogenus (strain DSM 25203 / XCL-2) (Thiomicrospira crunogena).